A 243-amino-acid chain; its full sequence is tRNA pseudouridine synthase A (243 aa).

The active-site Nucleophile is Asp-53. Substrate is bound at residue Tyr-111.

This sequence belongs to the tRNA pseudouridine synthase TruA family. Homodimer.

The catalysed reaction is uridine(38/39/40) in tRNA = pseudouridine(38/39/40) in tRNA. In terms of biological role, formation of pseudouridine at positions 38, 39 and 40 in the anticodon stem and loop of transfer RNAs. This is tRNA pseudouridine synthase A from Chlorobium chlorochromatii (strain CaD3).